Here is a 114-residue protein sequence, read N- to C-terminus: Peroxisomal biogenesis factor 39 (114 aa).

Disordered stretches follow at residues 1-26 and 53-114; these read MSWW…AEPA and ITAT…PRVS. Ser102 carries the post-translational modification Phosphoserine.

Its subcellular location is the peroxisome. May be a peroxin involved in the PTS2-mediated protein import pathway. This is Peroxisomal biogenesis factor 39 (Pex39) from Mus musculus (Mouse).